The sequence spans 698 residues: MQAHELFRYFRMPELVDFRQYVRTLPTNTLMGFGAFAALTTFWYATRPKPLKPPCDLSMQSVEVAGSGGARRSALLDSDEPLVYFYDDVTTLYEGFQRGIQVSNNGPCLGSRKPDQPYEWLSYKQVAELSECIGSALIQKGFKTAPDQFIGIFAQNRPEWVIIEQGCFAYSMVIVPLYDTLGNEAITYIVNKAELSLVFVDKPEKAKLLLEGVENKLIPGLKIIVVMDAYGSELVERGQRCGVEVTSMKAMEDLGRANRRKPKPPAPEDLAVICFTSGTTGNPKGAMVTHRNIVSDCSAFVKATENTVNPCPDDTLISFLPLAHMFERVVECVMLCHGAKIGFFQGDIRLLMDDLKVLQPTVFPVVPRLLNRMFDRIFGQANTTLKRWLLDFASKRKEAELRSGIIRNNSLWDRLIFHKVQSSLGGRVRLMVTGAAPVSATVLTFLRAALGCQFYEGYGQTECTAGCCLTMPGDWTAGHVGAPMPCNLIKLVDVEEMNYMAAEGEGEVCVKGPNVFQGYLKDPAKTAEALDKDGWLHTGDIGKWLPNGTLKIIDRKKHIFKLAQGEYIAPEKIENIYMRSEPVAQVFVHGESLQAFLIAIVVPDVETLCSWAQKRGFEGSFEELCRNKDVKKAILEDMVRLGKDSGLKPFEQVKGITLHPELFSIDNGLLTPTMKAKRPELRNYFRSQIDDLYSTIKV.

Methionine 1 carries the N-acetylmethionine modification. Tyrosine 9 is subject to 3'-nitrotyrosine. Residues 25–45 form a helical; Signal-anchor for type III membrane protein membrane-spanning segment; that stretch reads LPTNTLMGFGAFAALTTFWYA. Topologically, residues 46–698 are cytoplasmic; sequence TRPKPLKPPC…IDDLYSTIKV (653 aa). At tyrosine 84 the chain carries Phosphotyrosine. Residue serine 135 is glycosylated (O-linked (GlcNAc) serine). N6-acetyllysine occurs at positions 207, 356, and 386. At serine 620 the chain carries Phosphoserine. Residue lysine 632 is modified to N6-acetyllysine.

Belongs to the ATP-dependent AMP-binding enzyme family. It depends on Mg(2+) as a cofactor. In terms of tissue distribution, highly expressed in liver, heart, skeletal muscle, kidney and erythroid cells, and to a lesser extent in brain, lung, placenta and pancreas.

Its subcellular location is the mitochondrion outer membrane. The protein localises to the peroxisome membrane. It localises to the microsome membrane. The protein resides in the endoplasmic reticulum membrane. It carries out the reaction a long-chain fatty acid + ATP + CoA = a long-chain fatty acyl-CoA + AMP + diphosphate. It catalyses the reaction (5Z,8Z,11Z,14Z)-eicosatetraenoate + ATP + CoA = (5Z,8Z,11Z,14Z)-eicosatetraenoyl-CoA + AMP + diphosphate. The catalysed reaction is 3,7,11,15-tetramethylhexadecanoate + ATP + CoA = phytanoyl-CoA + AMP + diphosphate. The enzyme catalyses hexadecanoate + ATP + CoA = hexadecanoyl-CoA + AMP + diphosphate. It carries out the reaction (E)-hexadec-2-enoate + ATP + CoA = (2E)-hexadecenoyl-CoA + AMP + diphosphate. It catalyses the reaction 2,6,10,14-tetramethylpentadecanoate + ATP + CoA = pristanoyl-CoA + AMP + diphosphate. The catalysed reaction is 14,15-epoxy-(5Z,8Z,11Z)-eicosatrienoate + ATP + CoA = 14,15-epoxy-(5Z,8Z,11Z)-eicosatrienoyl-CoA + AMP + diphosphate. The enzyme catalyses 5-hydroxy-(6E,8Z,11Z,14Z)-eicosatetraenoate + ATP + CoA = 5-hydroxy-(6E,8Z,11Z,14Z)-eicosatetraenoyl-CoA + AMP + diphosphate. It carries out the reaction 12-hydroxy-(5Z,8Z,10E,14Z)-eicosatetraenoate + ATP + CoA = 12-hydroxy-(5Z,8Z,10E,14Z)-eicosatetraenoyl-CoA + AMP + diphosphate. It catalyses the reaction 15-hydroxy-(5Z,8Z,11Z,13E)-eicosatetraenoate + ATP + CoA = 15-hydroxy-(5Z,8Z,11Z,13E)-eicosatetraenoyl-CoA + AMP + diphosphate. The catalysed reaction is (9Z)-octadecenoate + ATP + CoA = (9Z)-octadecenoyl-CoA + AMP + diphosphate. Its activity is regulated as follows. Inhibited at high temperature and by arachidonate. Its function is as follows. Catalyzes the conversion of long-chain fatty acids to their active form acyl-CoAs for both synthesis of cellular lipids, and degradation via beta-oxidation. Preferentially uses palmitoleate, oleate and linoleate. Preferentially activates arachidonate than epoxyeicosatrienoic acids (EETs) or hydroxyeicosatrienoic acids (HETEs). The sequence is that of Long-chain-fatty-acid--CoA ligase 1 from Homo sapiens (Human).